We begin with the raw amino-acid sequence, 263 residues long: Ribonuclease HII (263 aa).

Positions 71-262 (KAIAGIDEVG…VKSMCCDSTN (192 aa)) constitute an RNase H type-2 domain. A divalent metal cation-binding residues include aspartate 77, glutamate 78, and aspartate 172.

This sequence belongs to the RNase HII family. It depends on Mn(2+) as a cofactor. Mg(2+) is required as a cofactor.

The protein localises to the cytoplasm. It catalyses the reaction Endonucleolytic cleavage to 5'-phosphomonoester.. Its function is as follows. Endonuclease that specifically degrades the RNA of RNA-DNA hybrids. In Streptococcus pyogenes serotype M1, this protein is Ribonuclease HII.